The sequence spans 295 residues: 4-hydroxy-tetrahydrodipicolinate synthase (295 aa).

Thr-47 serves as a coordination point for pyruvate. Tyr-135 acts as the Proton donor/acceptor in catalysis. Lys-163 acts as the Schiff-base intermediate with substrate in catalysis. Ile-206 lines the pyruvate pocket.

Homodimer. In fact, exists in a monomer-dimer equilibrium in solution, shifted in favor of the dimer in presence of the substrate pyruvate; the monomer has significantly reduced activity compared with the dimer.

The protein resides in the cytoplasm. The catalysed reaction is L-aspartate 4-semialdehyde + pyruvate = (2S,4S)-4-hydroxy-2,3,4,5-tetrahydrodipicolinate + H2O + H(+). It functions in the pathway amino-acid biosynthesis; L-lysine biosynthesis via DAP pathway; (S)-tetrahydrodipicolinate from L-aspartate: step 3/4. With respect to regulation, is insensitive to lysine-feedback inhibition. Shows ASA substrate inhibition. In terms of biological role, catalyzes the condensation of (S)-aspartate-beta-semialdehyde [(S)-ASA] and pyruvate to 4-hydroxy-tetrahydrodipicolinate (HTPA). The chain is 4-hydroxy-tetrahydrodipicolinate synthase from Staphylococcus aureus (strain MRSA252).